We begin with the raw amino-acid sequence, 518 residues long: Protein CYCLOPS (518 aa).

Residues 401-451 (DKKRKSLERYGSITSAVSDDKGDTTKKRRVERSRKMAEAKERNSTPSVPSD) form a disordered region. Short sequence motifs (nuclear localization signal) lie at residues 402 to 405 (KKRK) and 426 to 429 (KKRR). Residues 433-443 (SRKMAEAKERN) show a composition bias toward basic and acidic residues. Residues 452 to 518 (MQAVLKRCEN…ERILSETEKM (67 aa)) adopt a coiled-coil conformation.

This sequence belongs to the CYCLOPS family. In terms of assembly, forms homodimers. Interacts with CCAMK. Post-translationally, phosphorylated at the N-terminus by CCAMK. In terms of tissue distribution, expressed in roots.

The protein localises to the nucleus. Its function is as follows. Involved in symbiotic signaling. Required for root infection by symbiotic rhizobia, infection thread (IT) formation, and nodule development. Probably not involved in nodule organogenesis. Involved in arbuscular mycorrhizal (AM) symbiosis. Required for fungal infection of the outer cortical cell layers, and for arbuscule development during the AM symbiosis, by binding, as a complex comprising CCaMK, CYCLOPS, and DELLA, to RAM1 promoter cis element thus promoting its expression. Acts downstream of CCAMK. Binds to the promoter of ERN1 and strongly transactivates ERN1, a transcriptional regulator required for nodulation. The polypeptide is Protein CYCLOPS (Lotus japonicus (Lotus corniculatus var. japonicus)).